The primary structure comprises 217 residues: Elongation factor Ts (217 aa).

The involved in Mg(2+) ion dislocation from EF-Tu stretch occupies residues 82-85 (TDFV).

This sequence belongs to the EF-Ts family.

It localises to the cytoplasm. Functionally, associates with the EF-Tu.GDP complex and induces the exchange of GDP to GTP. It remains bound to the aminoacyl-tRNA.EF-Tu.GTP complex up to the GTP hydrolysis stage on the ribosome. This chain is Elongation factor Ts, found in Prochlorococcus marinus (strain SARG / CCMP1375 / SS120).